Reading from the N-terminus, the 122-residue chain is Serum amyloid A-3 protein (122 aa).

Positions 1–18 (MKPFLAIIFCFLILGVDS) are cleaved as a signal peptide. Positions 100–122 (ANKWGRSGKDPNHFRPAGLPSKY) are disordered.

Belongs to the SAA family. As to expression, expressed by the liver; secreted in plasma.

It localises to the secreted. Major acute phase reactant. Apolipoprotein of the HDL complex. In vitro exhibits antimicrobial activity against Escherichia coli, Streptococcus uberis and Pseudomonas aeruginosa. This chain is Serum amyloid A-3 protein (SAA3), found in Mesocricetus auratus (Golden hamster).